Reading from the N-terminus, the 732-residue chain is Alpha-galactosidase Mel36A (732 aa).

Substrate contacts are provided by residues 370-371, Trp-415, Arg-447, 480-484, 530-533, and Asp-552; these read DD, KWDMN, and CSGG. Asp-482 serves as the catalytic Nucleophile. Residue Asp-552 is the Proton donor of the active site.

It belongs to the glycosyl hydrolase 36 family. In terms of assembly, homotetramer.

It catalyses the reaction Hydrolysis of terminal, non-reducing alpha-D-galactose residues in alpha-D-galactosides, including galactose oligosaccharides, galactomannans and galactolipids.. Hydrolyzes the short-chain alpha-galactosaccharide raffinose. The polypeptide is Alpha-galactosidase Mel36A (Lactobacillus acidophilus (strain ATCC 700396 / NCK56 / N2 / NCFM)).